A 426-amino-acid chain; its full sequence is Histone deacetylase 9 (426 aa).

The tract at residues 6–318 (KISYFYDGDV…WTVETGILLD (313 aa)) is histone deacetylase. Catalysis depends on histidine 137, which acts as the Proton donor/acceptor. Aspartate 172, histidine 174, and aspartate 261 together coordinate Zn(2+). The disordered stretch occupies residues 383 to 426 (PDFYIPDFDEDEQNPDVRADQRSRDKQIQRDDEYFDGDNDNDAS). The span at 397–414 (PDVRADQRSRDKQIQRDD) shows a compositional bias: basic and acidic residues. Positions 415–426 (EYFDGDNDNDAS) are enriched in acidic residues.

It belongs to the histone deacetylase family. HD type 1 subfamily. As to quaternary structure, interacts with AHL22. Binds to farnesylated ASG2 in the cytosol. It depends on Zn(2+) as a cofactor.

It localises to the nucleus. Its subcellular location is the cytoplasm. The protein resides in the cytosol. The enzyme catalyses N(6)-acetyl-L-lysyl-[histone] + H2O = L-lysyl-[histone] + acetate. Responsible for the deacetylation of lysine residues on the N-terminal part of the core histones (H2A, H2B, H3 and H4). Histone deacetylation gives a tag for epigenetic repression and plays an important role in transcriptional regulation, cell cycle progression and developmental events. Histone deacetylases act via the formation of large multiprotein complexes. This Arabidopsis thaliana (Mouse-ear cress) protein is Histone deacetylase 9 (HDA9).